Consider the following 323-residue polypeptide: Sphingolipid delta(4)-desaturase DES1 (323 aa).

Residue glycine 2 is the site of N-myristoyl glycine attachment. Helical transmembrane passes span 41–61 (PNLI…FYIV) and 68–88 (WVIF…TLGI). Positions 89–93 (HEIAH) match the Histidine box-1 motif. Residues 107–127 (WFGMFANLPIGIPYSVSFKSY) form a helical membrane-spanning segment. The Histidine box-2 motif lies at 128-132 (HMDHH). 3 helical membrane-spanning segments follow: residues 152 to 172 (FFCT…FYAF), 184 to 204 (YLEV…YYFL), and 209 to 229 (LVYM…SGHF). Residues 259–263 (HNEHH) carry the Histidine box-3 motif. Serine 307 bears the Phosphoserine mark.

This sequence belongs to the fatty acid desaturase type 1 family. DEGS subfamily. As to quaternary structure, interacts with RLBP1; the interaction increases synthesis of chromophore-precursors by DEGS1. Post-translationally, myristoylation can target the enzyme to the mitochondria leading to an increase in ceramide levels.

It localises to the mitochondrion membrane. It is found in the endoplasmic reticulum membrane. The enzyme catalyses an N-acylsphinganine + 2 Fe(II)-[cytochrome b5] + O2 + 2 H(+) = an N-acylsphing-4-enine + 2 Fe(III)-[cytochrome b5] + 2 H2O. It catalyses the reaction all-trans-retinol = 11-cis-retinol. The catalysed reaction is all-trans-retinol = 9-cis-retinol. It carries out the reaction all-trans-retinol = 13-cis-retinol. The enzyme catalyses 11-cis-retinol = 13-cis-retinol. It catalyses the reaction 11-cis-retinol = 9-cis-retinol. In terms of biological role, has sphingolipid-delta-4-desaturase activity. Converts D-erythro-sphinganine to D-erythro-sphingosine (E-sphing-4-enine). Catalyzes the equilibrium isomerization of retinols. The sequence is that of Sphingolipid delta(4)-desaturase DES1 (DEGS1) from Pongo abelii (Sumatran orangutan).